A 218-amino-acid polypeptide reads, in one-letter code: Protein GrpE (218 aa).

The segment at 1-78 (MSEFNKDDYL…DSADTLTPLG (78 aa)) is disordered. The span at 14–58 (PDPSDAEAAAQASSGADASAESGSAQDSAAQAPSNEGADAAPAAA) shows a compositional bias: low complexity.

The protein belongs to the GrpE family. Homodimer.

The protein localises to the cytoplasm. In terms of biological role, participates actively in the response to hyperosmotic and heat shock by preventing the aggregation of stress-denatured proteins, in association with DnaK and GrpE. It is the nucleotide exchange factor for DnaK and may function as a thermosensor. Unfolded proteins bind initially to DnaJ; upon interaction with the DnaJ-bound protein, DnaK hydrolyzes its bound ATP, resulting in the formation of a stable complex. GrpE releases ADP from DnaK; ATP binding to DnaK triggers the release of the substrate protein, thus completing the reaction cycle. Several rounds of ATP-dependent interactions between DnaJ, DnaK and GrpE are required for fully efficient folding. This is Protein GrpE from Bifidobacterium longum (strain NCC 2705).